An 83-amino-acid polypeptide reads, in one-letter code: Toxin AahP985 (83 aa).

An N-terminal signal peptide occupies residues 1–18 (MNYLVMISLALLIAGVDS). An LCN-type CS-alpha/beta domain is found at 20–82 (RDAYIAKNDN…VPIKLSGECH (63 aa)). Cystine bridges form between Cys-30/Cys-81, Cys-34/Cys-54, Cys-40/Cys-64, and Cys-44/Cys-66.

It belongs to the long (4 C-C) scorpion toxin superfamily. Sodium channel inhibitor family. Alpha subfamily. In terms of tissue distribution, expressed by the venom gland.

The protein localises to the secreted. Binds voltage-independently at site-3 of sodium channels (Nav) and inhibits the inactivation of the activated channels, thereby blocking neuronal transmission. This chain is Toxin AahP985, found in Androctonus australis (Sahara scorpion).